A 173-amino-acid polypeptide reads, in one-letter code: Adenine phosphoribosyltransferase (173 aa).

It belongs to the purine/pyrimidine phosphoribosyltransferase family. Homodimer.

It localises to the cytoplasm. It catalyses the reaction AMP + diphosphate = 5-phospho-alpha-D-ribose 1-diphosphate + adenine. The protein operates within purine metabolism; AMP biosynthesis via salvage pathway; AMP from adenine: step 1/1. Catalyzes a salvage reaction resulting in the formation of AMP, that is energically less costly than de novo synthesis. The protein is Adenine phosphoribosyltransferase of Chloroflexus aurantiacus (strain ATCC 29366 / DSM 635 / J-10-fl).